The sequence spans 500 residues: Probable cytosol aminopeptidase (500 aa).

Residues Lys265 and Asp270 each contribute to the Mn(2+) site. The active site involves Lys277. The Mn(2+) site is built by Asp288, Asp347, and Glu349. Arg351 is an active-site residue.

Belongs to the peptidase M17 family. Mn(2+) is required as a cofactor.

The protein resides in the cytoplasm. It carries out the reaction Release of an N-terminal amino acid, Xaa-|-Yaa-, in which Xaa is preferably Leu, but may be other amino acids including Pro although not Arg or Lys, and Yaa may be Pro. Amino acid amides and methyl esters are also readily hydrolyzed, but rates on arylamides are exceedingly low.. It catalyses the reaction Release of an N-terminal amino acid, preferentially leucine, but not glutamic or aspartic acids.. In terms of biological role, presumably involved in the processing and regular turnover of intracellular proteins. Catalyzes the removal of unsubstituted N-terminal amino acids from various peptides. The polypeptide is Probable cytosol aminopeptidase (Rickettsia typhi (strain ATCC VR-144 / Wilmington)).